The sequence spans 179 residues: Protein TIFY 11a (179 aa).

Residues 62 to 97 (VDGGGQQFTIFYAGKVVVIDRCTPAMAAELMRFASA) enclose the Tify domain. The Jas motif lies at 115–140 (PIARKASLKRFLAKRKATPASARSSY). The short motif at 117 to 124 (ARKASLKR) is the Nuclear localization signal element.

It belongs to the TIFY/JAZ family. Interacts with BHLH148. Interacts with COI1A in a coronatine-dependent manner. Interacts with COI1B in a coronatine-dependent manner. Coronatine is an analog of jasmonoyl isoleucine (JA-Ile). Interacts with RSS3. Forms a ternary complex with RSS3 and BHLH094 in the nucleus. Interacts with BHLH062 and NINJA1. Interacts with MYB30. Post-translationally, ubiquitinated. Targeted for degradation by the SCF(COI1) E3 ubiquitin ligase-proteasome pathway during jasmonate signaling.

It localises to the nucleus. In terms of biological role, repressor of jasmonate (JA) responses. Forms a ternary complex with RSS3 and BHLH94 to negatively regulate JA-responsive genes. Acts as a positive regulator of tolerance to salt stress. Involved in salt tolerance by modulating potassium homeostasis through JA signaling and regulation of the expression of potassium ion transporter genes. Acts as a transcriptional regulator targeted by the SCF(COI1) E3 ubiquitin ligase complexes in the JA signaling pathway, and interacts with BHLH062 that may directly regulate the ion transporter genes. Acts as a positive regulator of tolerance to dehydration stress. Acts as a negative regulator of tolerance to cold stress by interacting with MYB30. In Oryza sativa subsp. japonica (Rice), this protein is Protein TIFY 11a.